Reading from the N-terminus, the 290-residue chain is SEYRQKRTVGEEVTTDMRHVDESHFLTTTHEAYKPIDPSEYRQKRTVGEEVTTDMRHVDESHFLTTTHEAYKPIDPSEYRQKRTVGEEVTTDMRHVDESHFLTTTHEAYKPIDPSEYRQKRTVGEEVTTDMRHVDESHFLTTTHEAYKPIDPSEYRQKRTVGEEVTTNMRHVDESHFLTTTHEAYKPIDPSEYRQKRTVGEEVTTDMRHVDESHFLTTTHEAYKPIDPSEYRQKRTVGEEVTTDMRHVDESHFLTTTHEAYKPIDPSEYRQKRTVGEEVTTDMRHVDESH.

8 repeats span residues 1 to 38, 39 to 76, 77 to 114, 115 to 152, 153 to 190, 191 to 228, 229 to 266, and 267 to 290; these read SEYRQKRTVGEEVTTDMRHVDESHFLTTTHEAYKPIDP, SEYRQKRTVGEEVTTNMRHVDESHFLTTTHEAYKPIDP, and SEYRQKRTVGEEVTTDMRHVDESH. Positions 251–290 are disordered; sequence SHFLTTTHEAYKPIDPSEYRQKRTVGEEVTTDMRHVDESH. Over residues 259–290 the composition is skewed to basic and acidic residues; sequence EAYKPIDPSEYRQKRTVGEEVTTDMRHVDESH.

It is found in the cytoplasm. The protein resides in the cytoskeleton. The protein is Microtubule-associated protein P320 of Trypanosoma brucei brucei.